The following is a 430-amino-acid chain: MSTITAVWAREILDSRGNPTVEVEVVLESGATGRAAVPSGASTGTREALELRDGDKDRYKGKGVQVAVANVREEIAEALVGQDALRQVNIDNILIELDGTENKERLGANAMLGVSMAVARAGANLLGIPLYQYLGGVNGKLLPVPLMNIINGGEHAPNNLDIQEFMIMPIGAETFAEALRMGAEIFHTLKGLLAADGHNTAVGDEGGFAPNLESHAQAFEYIMKAIEAAGYRPGADVALAIDAAASEFYKDGKYVLAGEGKEFDAQGMIDFYTDFVERFPLISIEDGLAEGDWEGWKKMTDDLGEKIQLVGDDLFVTNPEILAEGIEQGACNSILIKLNQIGTLTETLDTMELAKTAGYTNVVSHRSGETSDHFIADLAVGLNAGQIKTGSLCRSDRLAKYNQLLRIEEDLEDDGIYYGPALKEAFFGED.

Gln-163 lines the (2R)-2-phosphoglycerate pocket. The active-site Proton donor is the Glu-205. The Mg(2+) site is built by Asp-242, Glu-285, and Asp-312. (2R)-2-phosphoglycerate is bound by residues Lys-337, Arg-366, Ser-367, and Lys-388. Lys-337 (proton acceptor) is an active-site residue.

Belongs to the enolase family. Mg(2+) is required as a cofactor.

Its subcellular location is the cytoplasm. It localises to the secreted. It is found in the cell surface. The enzyme catalyses (2R)-2-phosphoglycerate = phosphoenolpyruvate + H2O. It functions in the pathway carbohydrate degradation; glycolysis; pyruvate from D-glyceraldehyde 3-phosphate: step 4/5. Catalyzes the reversible conversion of 2-phosphoglycerate (2-PG) into phosphoenolpyruvate (PEP). It is essential for the degradation of carbohydrates via glycolysis. The protein is Enolase of Maridesulfovibrio salexigens (strain ATCC 14822 / DSM 2638 / NCIMB 8403 / VKM B-1763) (Desulfovibrio salexigens).